The following is a 284-amino-acid chain: uncharacterized protein (284 aa).

Residues 12-32 (ILFILFVVAFCVYLVPRVAIN) traverse the membrane as a helical segment.

Belongs to the serine esterase family.

Its subcellular location is the membrane. This is an uncharacterized protein from Escherichia coli O157:H7.